The primary structure comprises 220 residues: 1-Cys peroxiredoxin B (220 aa).

Residues 4 to 165 (LTLGDVVPDL…VLRATDALLT (162 aa)) enclose the Thioredoxin domain. C46 (cysteine sulfenic acid (-SOH) intermediate) is an active-site residue. The Bipartite nuclear localization signal motif lies at 195 to 218 (KARFPAGFETAQLPSNKCYLRFTQ).

Belongs to the peroxiredoxin family. Prx6 subfamily.

The protein resides in the nucleus. The protein localises to the cytoplasm. The catalysed reaction is a hydroperoxide + [thioredoxin]-dithiol = an alcohol + [thioredoxin]-disulfide + H2O. Thiol-specific peroxidase that catalyzes the reduction of hydrogen peroxide and organic hydroperoxides to water and alcohols, respectively. Seems to contribute to the inhibition of germination during stress. The protein is 1-Cys peroxiredoxin B of Oryza sativa subsp. indica (Rice).